We begin with the raw amino-acid sequence, 64 residues long: UPF0434 protein TERTU_2813 (64 aa).

The protein belongs to the UPF0434 family.

The sequence is that of UPF0434 protein TERTU_2813 from Teredinibacter turnerae (strain ATCC 39867 / T7901).